Consider the following 212-residue polypeptide: ER lumen protein-retaining receptor (212 aa).

At 1–2 (MN) the chain is on the lumenal side. A helical membrane pass occupies residues 3 to 21 (IFRFAGDLSHVFAIIILLL). At 22–35 (KIWKTRSCAGISGK) the chain is on the cytoplasmic side. A helical membrane pass occupies residues 36-53 (SQILFAVVYLTRYLDLFT). Topologically, residues 54 to 61 (TYVSLYNS) are lumenal. Residues 62 to 80 (VMKVLFLATSGATVYLMYV) traverse the membrane as a helical segment. The Cytoplasmic segment spans residues 81-96 (KFKATYDHNHDSFRIE). Residues 97 to 110 (FLLVPCALLSLVIN) traverse the membrane as a helical segment. Over 111 to 117 (HEFTVME) the chain is Lumenal. A helical transmembrane segment spans residues 118-137 (VLWTFSIYLESVAILPQLFL). The Cytoplasmic segment spans residues 138-149 (VSRTGEAESITS). A helical membrane pass occupies residues 150–168 (HYLFALGSYRALYLLNWVY). Topologically, residues 169–178 (RYMVESHYDL) are lumenal. Residues 179 to 199 (IAIFAGVVQTVLYCDFFYLYI) traverse the membrane as a helical segment. Over 200-212 (TKVLKGKKLQLPA) the chain is Cytoplasmic.

Belongs to the ERD2 family.

It localises to the endoplasmic reticulum membrane. Functionally, required for the retention of luminal endoplasmic reticulum proteins. Determines the specificity of the luminal ER protein retention system. Also required for normal vesicular traffic through the Golgi. The chain is ER lumen protein-retaining receptor (KdelR) from Drosophila melanogaster (Fruit fly).